Here is a 302-residue protein sequence, read N- to C-terminus: tRNA demethylase abh1 (302 aa).

Substrate contacts are provided by residues tryptophan 142 and 149–151 (YDW). The Fe2OG dioxygenase domain maps to 187-299 (KAEAAIVNFY…RVNFNVRQVR (113 aa)). 194 to 196 (NFY) is a 2-oxoglutarate binding site. Residues histidine 205 and aspartate 207 each coordinate Fe cation. Arginine 235 contributes to the substrate binding site. Histidine 261 provides a ligand contact to Fe cation. 2-oxoglutarate is bound at residue 290 to 296 (RVNFNVR).

Belongs to the alkB family. The cofactor is Fe(2+).

It localises to the cytoplasm. It is found in the nucleus. It catalyses the reaction an N(1)-methyladenosine in tRNA + 2-oxoglutarate + O2 = an adenosine in tRNA + formaldehyde + succinate + CO2. The catalysed reaction is N(1)-methyladenosine(58) in tRNA + 2-oxoglutarate + O2 = adenosine(58) in tRNA + formaldehyde + succinate + CO2. Functionally, dioxygenase that acts as on nucleic acids, such as DNA and tRNA. Requires molecular oxygen, alpha-ketoglutarate and iron. Mainly acts as a tRNA demethylase by removing N(1)-methyladenine from various tRNAs, with a preference for N(1)-methyladenine at position 58 (m1A58) present on a stem loop structure of tRNAs. Acts as a regulator of translation initiation and elongation. Does not appear to possess DNA repair activity; no activity towards methylated DNA or etheno adducts. Exhibits a weak and unstable DNA lyase activity; this activity is probably not biologically significant and proceeds by a mechanism different from the classical dioxygenase reaction as it does not require 2-oxoglutarate or iron. This Schizosaccharomyces pombe (strain 972 / ATCC 24843) (Fission yeast) protein is tRNA demethylase abh1 (abh1).